The following is a 689-amino-acid chain: MIKRKIWCNLCIDLVAFTSEIFKGAVFQSLDGIVVSANCKLRKIFTLKSKPQDTADKDAVYGVPFSTDEPTDIIPRSCQLMTDVPHVTQLLNMTKLRQTEIKFGGHPLRSAESDQFINRGTSITRNSKNQDVCHIAFGSKVLGPPPLSGRRNNMKISSETVRSVGSKNNRSCQPSTVEKCVNGTEMSALLIPESEEQGNKENIHQIKQTVPIHAANLHIMHPHPPQEPSADKNNNRRRLRLKSTSRERTETPSGSSSGNNRIEDKASTILTTVSQQGAELLNSGTLGPQSPDQSDEWIFPENADHISYLASSRQSLLLGDDSCNPSHLWLEASKESEHDQQAEESQSVPKDIFTFSSRPRSAPHGKTQTMSPEELSFILDLKEDNSVTSRDTQSEDDFYGGDSSEEGNHSIQGSRGPTTGPSELTQLTLESLLGKAAKRTSKEYLRSAYTEAGATESQDSSMEQIDRNNFEMSLLPTTCLSPTGRRCGSCQKTPEPVIKAKDLSAQQVPASLNKTSLKEISGERLSSIPEASEYDWRNYQPSQMSESELQMLASLRWQQNEELEDAGTSHGLSASQVDNCNVSISTSSDDTTTWNSCLPPPVNQGRHYQKEMNPPSPSNPRDWLNMLSPPIVPPSQQPAEQRPDSCESLSVQGEEDLSVEEDEEVLTLLYDPCLNCYFDPQTGKYYELV.

Disordered stretches follow at residues 241 to 263 (LKSTSRERTETPSGSSSGNNRIE), 333 to 423 (SKES…GPSE), and 584 to 659 (ISTS…DLSV). 2 stretches are compositionally biased toward polar residues: residues 251-260 (TPSGSSSGNN) and 343-359 (EESQSVPKDIFTFSSRP). Over residues 394–405 (SEDDFYGGDSSE) the composition is skewed to acidic residues. Residues 409 to 421 (HSIQGSRGPTTGP) show a composition bias toward polar residues. Residues 584–593 (ISTSSDDTTT) are compositionally biased toward low complexity.

This Homo sapiens (Human) protein is Protein CFAP20DC.